A 181-amino-acid polypeptide reads, in one-letter code: MEQYHGTTILSVRRQTADGIQVALGGDGQVTLGNIVVKGTARKVRKLYQGRVLAGFAGATADAFTLFERFEAKLEKHQGQLTRAAIELTKDWRTDRVLRRLEAMLAVADHSASLIITGNGDVLEPEQGIVAIGSGGAYAHSAAKALLSNTDLPAAEIVKKSLEIAGELCIYTNMHHTIETL.

Thr-7 is an active-site residue. Na(+)-binding residues include Gly-166, Cys-169, and Thr-172.

This sequence belongs to the peptidase T1B family. HslV subfamily. As to quaternary structure, a double ring-shaped homohexamer of HslV is capped on each side by a ring-shaped HslU homohexamer. The assembly of the HslU/HslV complex is dependent on binding of ATP.

It is found in the cytoplasm. It catalyses the reaction ATP-dependent cleavage of peptide bonds with broad specificity.. Allosterically activated by HslU binding. Protease subunit of a proteasome-like degradation complex believed to be a general protein degrading machinery. This Acidovorax ebreus (strain TPSY) (Diaphorobacter sp. (strain TPSY)) protein is ATP-dependent protease subunit HslV.